Consider the following 283-residue polypeptide: 2-dehydro-3-deoxyphosphooctonate aldolase (283 aa).

This sequence belongs to the KdsA family.

The protein resides in the cytoplasm. It catalyses the reaction D-arabinose 5-phosphate + phosphoenolpyruvate + H2O = 3-deoxy-alpha-D-manno-2-octulosonate-8-phosphate + phosphate. It participates in carbohydrate biosynthesis; 3-deoxy-D-manno-octulosonate biosynthesis; 3-deoxy-D-manno-octulosonate from D-ribulose 5-phosphate: step 2/3. The protein operates within bacterial outer membrane biogenesis; lipopolysaccharide biosynthesis. The polypeptide is 2-dehydro-3-deoxyphosphooctonate aldolase (Vibrio cholerae serotype O1 (strain ATCC 39315 / El Tor Inaba N16961)).